An 836-amino-acid polypeptide reads, in one-letter code: DNA gyrase subunit A (836 aa).

The region spanning 34 to 500 (LPDARDGLKP…AGDVRDIEDI (467 aa)) is the Topo IIA-type catalytic domain. Catalysis depends on Tyr122, which acts as the O-(5'-phospho-DNA)-tyrosine intermediate. The GyrA-box signature appears at 527-533 (QKRGGQG).

This sequence belongs to the type II topoisomerase GyrA/ParC subunit family. Heterotetramer, composed of two GyrA and two GyrB chains. In the heterotetramer, GyrA contains the active site tyrosine that forms a transient covalent intermediate with DNA, while GyrB binds cofactors and catalyzes ATP hydrolysis.

Its subcellular location is the cytoplasm. It carries out the reaction ATP-dependent breakage, passage and rejoining of double-stranded DNA.. Functionally, a type II topoisomerase that negatively supercoils closed circular double-stranded (ds) DNA in an ATP-dependent manner to modulate DNA topology and maintain chromosomes in an underwound state. Negative supercoiling favors strand separation, and DNA replication, transcription, recombination and repair, all of which involve strand separation. Also able to catalyze the interconversion of other topological isomers of dsDNA rings, including catenanes and knotted rings. Type II topoisomerases break and join 2 DNA strands simultaneously in an ATP-dependent manner. The protein is DNA gyrase subunit A of Chlamydia trachomatis serovar D (strain ATCC VR-885 / DSM 19411 / UW-3/Cx).